A 148-amino-acid chain; its full sequence is Deoxyuridine 5'-triphosphate nucleotidohydrolase (148 aa).

Residues 68 to 70 (RSG), asparagine 81, 85 to 87 (TID), and lysine 95 each bind substrate.

This sequence belongs to the dUTPase family. Requires Mg(2+) as cofactor.

It catalyses the reaction dUTP + H2O = dUMP + diphosphate + H(+). Its pathway is pyrimidine metabolism; dUMP biosynthesis; dUMP from dCTP (dUTP route): step 2/2. Its function is as follows. This enzyme is involved in nucleotide metabolism: it produces dUMP, the immediate precursor of thymidine nucleotides and it decreases the intracellular concentration of dUTP so that uracil cannot be incorporated into DNA. This chain is Deoxyuridine 5'-triphosphate nucleotidohydrolase, found in Rickettsia typhi (strain ATCC VR-144 / Wilmington).